The chain runs to 344 residues: Anthranilate phosphoribosyltransferase (344 aa).

Residues Gly-86, 89–90, Thr-94, 96–99, 114–122, and Ser-126 each bind 5-phospho-alpha-D-ribose 1-diphosphate; these read GD, NIST, and KHGNKSASG. An anthranilate-binding site is contributed by Gly-86. Mg(2+) is bound at residue Ser-98. Asn-117 is an anthranilate binding site. Position 172 (Arg-172) interacts with anthranilate. Mg(2+) contacts are provided by Asp-231 and Glu-232.

The protein belongs to the anthranilate phosphoribosyltransferase family. In terms of assembly, homodimer. It depends on Mg(2+) as a cofactor.

It carries out the reaction N-(5-phospho-beta-D-ribosyl)anthranilate + diphosphate = 5-phospho-alpha-D-ribose 1-diphosphate + anthranilate. It participates in amino-acid biosynthesis; L-tryptophan biosynthesis; L-tryptophan from chorismate: step 2/5. Catalyzes the transfer of the phosphoribosyl group of 5-phosphorylribose-1-pyrophosphate (PRPP) to anthranilate to yield N-(5'-phosphoribosyl)-anthranilate (PRA). This is Anthranilate phosphoribosyltransferase from Prochlorococcus marinus (strain AS9601).